Reading from the N-terminus, the 98-residue chain is C-X-C motif chemokine 10 (98 aa).

The N-terminal stretch at 1–21 (MNPSAAVIFCLILLGLSGTQG) is a signal peptide. Arg26 bears the Citrulline mark. 2 disulfide bridges follow: Cys30-Cys57 and Cys32-Cys74.

It belongs to the intercrine alpha (chemokine CxC) family. Monomer, dimer, and tetramer. Interacts with CXCR3 (via N-terminus). Expressed in the spleen, thymus, lymph nodes and liver. Expressed in astrocytes, microglia, and neurons.

It localises to the secreted. Its function is as follows. Pro-inflammatory cytokine that is involved in a wide variety of processes such as chemotaxis, differentiation, and activation of peripheral immune cells, regulation of cell growth, apoptosis and modulation of angiostatic effects. Plays thereby an important role during viral infections by stimulating the activation and migration of immune cells to the infected sites. Mechanistically, binding of CXCL10 to the CXCR3 receptor activates G protein-mediated signaling and results in downstream activation of phospholipase C-dependent pathway, an increase in intracellular calcium production and actin reorganization. In turn, recruitment of activated Th1 lymphocytes occurs at sites of inflammation. Activation of the CXCL10/CXCR3 axis also plays an important role in neurons in response to brain injury for activating microglia, the resident macrophage population of the central nervous system, and directing them to the lesion site. This recruitment is an essential element for neuronal reorganization. This is C-X-C motif chemokine 10 (Cxcl10) from Mus musculus (Mouse).